The chain runs to 3603 residues: Plipastatin synthase subunit D (3603 aa).

The tract at residues 7–306 (IQDIYPLSYM…NTMPVRVQGA (300 aa)) is condensation 1. A domain 1 (proline-activating) region spans residues 7–1043 (IQDIYPLSYM…ALIIREAEQN (1037 aa)). Residues 490–889 (TYRELNKAAN…NHPDISEAAI (400 aa)) are adenylation 1. Residues 966-1041 (APRNLLEAKL…GLALIIREAE (76 aa)) enclose the Carrier 1 domain. Residue Ser-1001 is modified to O-(pantetheine 4'-phosphoryl)serine. The condensation 2 stretch occupies residues 1053–1334 (KRDTYPVSSA…NTLALRTRPA (282 aa)). Residues 1053-2069 (KRDTYPVSSA…TVEGLATVIR (1017 aa)) form a domain 2 (glutamine-activating) region. Residues 1521–1924 (TYKELNEQAN…SIEGVREAAV (404 aa)) form an adenylation 2 region. The Carrier 2 domain maps to 1997–2072 (APRNVTEMKL…GLATVIREGT (76 aa)). Ser-2032 is modified (O-(pantetheine 4'-phosphoryl)serine). Residues 2084-2374 (KQETYPVSSA…NTLALRTRPE (291 aa)) form a condensation 3 region. The interval 2084-3596 (KQETYPVSSA…ELTEDALQEI (1513 aa)) is domain 3 (proline-activating). Residues 2560–2956 (TYQELDEWSN…CIKGVKDAAV (397 aa)) form an adenylation 3 region. The Carrier 3 domain maps to 3034-3108 (PPSSKMEQIL…ELAAYIRDSD (75 aa)). Ser-3069 carries the post-translational modification O-(pantetheine 4'-phosphoryl)serine. Positions 3116 to 3596 (VEGDVQWSPV…ELTEDALQEI (481 aa)) are epimerization.

Belongs to the ATP-dependent AMP-binding enzyme family. It depends on pantetheine 4'-phosphate as a cofactor.

This protein is a multifunctional enzyme, able to activate and polymerize the amino acids Pro, Gln and Tyr as part of the biosynthesis of the lipopeptide antibiotic plipastatin. The Tyr residue is further epimerized to the D-isomer form. The activation sites for these amino acids consist of individual domains. This chain is Plipastatin synthase subunit D (ppsD), found in Bacillus subtilis (strain 168).